The sequence spans 263 residues: uncharacterized protein (263 aa).

The N-terminal stretch at 1 to 22 (MEYLKRLALLISVIILTIFIMG) is a signal peptide. Residue cysteine 23 is the site of N-palmitoyl cysteine attachment. A lipid anchor (S-diacylglycerol cysteine) is attached at cysteine 23.

Belongs to the staphylococcal tandem lipoprotein family.

Its subcellular location is the cell membrane. This is an uncharacterized protein from Staphylococcus aureus (strain COL).